The primary structure comprises 513 residues: Na(+)/H(+) antiporter NhaB (513 aa).

Transmembrane regions (helical) follow at residues 23-43 (LALIIFLIVNPLIFLISPFVA), 52-72 (IFTLAMALKCYPLLPGGLLAI), 97-117 (LLLMFMVAGIYFMKQLLLFIF), 120-140 (LLLSIRSKMLLSLSFCVAAAF), 144-164 (FLDALTVVAVVISVAVGFYGI), 202-222 (LMMHAGVGTALGGVMTMVGEP), 238-258 (FFLRMSPVTVPVLICGLLTCL), 303-323 (AIIGVWLVTALALHLAEVGLI), 348-368 (TESLPFTALLTVFFSVVAVII), 391-411 (LFYIFNGLLSSISDNVFVGTI), 447-467 (ATPNGQAAFLFLLTSALAPLI), and 475-495 (VWMALPYTLVLTLVGLLCVEF).

It belongs to the NhaB Na(+)/H(+) (TC 2.A.34) antiporter family.

It is found in the cell inner membrane. The enzyme catalyses 2 Na(+)(in) + 3 H(+)(out) = 2 Na(+)(out) + 3 H(+)(in). Functionally, na(+)/H(+) antiporter that extrudes sodium in exchange for external protons. This is Na(+)/H(+) antiporter NhaB from Shigella flexneri serotype 5b (strain 8401).